The following is a 98-amino-acid chain: Histone H4-like protein type G (98 aa).

Residues 17 to 21 (KCHRK) mediate DNA binding.

Belongs to the histone H4 family. In terms of assembly, the nucleosome is a histone octamer containing two molecules each of H2A, H2B, H3 and H4 assembled in one H3-H4 heterotetramer and two H2A-H2B heterodimers. The octamer wraps approximately 147 bp of DNA.

It is found in the nucleus. The protein resides in the chromosome. Core component of nucleosome. Nucleosomes wrap and compact DNA into chromatin, limiting DNA accessibility to the cellular machineries which require DNA as a template. Histones thereby play a central role in transcription regulation, DNA repair, DNA replication and chromosomal stability. DNA accessibility is regulated via a complex set of post-translational modifications of histones, also called histone code, and nucleosome remodeling. The sequence is that of Histone H4-like protein type G from Homo sapiens (Human).